Consider the following 514-residue polypeptide: MKYRDLRDFLAQLERQGELKRITAPVSTRLEMTEIADRVLRAGGPALLFENARHNDAPADMPVLANLFGTPRRVAWGMGADDVGALRETGELLASLREPEAPKGLRDALAKVSMLKAALWDMSPKTVRSAACQEIVWEGADVDLGRLPIQTCWPGDVAPLLAWGLVITRGPNARRQNLGIYRQQPLGPNKLIMRWLSHRGGALDFRDHAQAHPGKSFPIAVALGADPATILDAVTPVPDTLSEYQFAGLLRGSRTEVVKALGSDLSVPASAEIVLEGHLLPADDPRAVAAAVPEGANPPPATGYEMALEGPYGDHTGYYNEQDWFPVFTVDRITMRRNPIYHSTYTGKPPDEPAVLGVALNEVFVPLLRRQLPEIVDFYLPPEGCSYRLAVVSIRKQYAGHAKRVMFGLWSVLRQFMYTKFIVVVDEDIDPRDWTEVVWAMTTRMDPVRDTVLVENTPIDYLDFASPVSGLGGKMGLDATNKWPGETSREWGTPIHMDEAVKRRVDAMWDTLGL.

Mn(2+) is bound at residue Asn177. Prenylated FMN contacts are provided by residues 180-182, 194-196, and 199-200; these read IYR, RWL, and RG. Glu243 provides a ligand contact to Mn(2+). Asp314 serves as the catalytic Proton donor.

The protein belongs to the UbiD family. Homohexamer. Requires prenylated FMN as cofactor. Mn(2+) serves as cofactor.

It is found in the cell membrane. The enzyme catalyses a 4-hydroxy-3-(all-trans-polyprenyl)benzoate + H(+) = a 2-(all-trans-polyprenyl)phenol + CO2. It functions in the pathway cofactor biosynthesis; ubiquinone biosynthesis. Catalyzes the decarboxylation of 3-octaprenyl-4-hydroxy benzoate to 2-octaprenylphenol, an intermediate step in ubiquinone biosynthesis. In Bordetella parapertussis (strain 12822 / ATCC BAA-587 / NCTC 13253), this protein is 3-octaprenyl-4-hydroxybenzoate carboxy-lyase.